The sequence spans 356 residues: Probable G-protein coupled receptor 32 (356 aa).

The Extracellular segment spans residues 1–44 (MNGVSEGTRGCSDRQPGVLTRDRSCSRKMNSSGCLSEEVGSLRP). An N-linked (GlcNAc...) asparagine glycan is attached at N30. The helical transmembrane segment at 45 to 67 (LTVVILSASIVVGVLGNGLVLWM) threads the bilayer. Over 68-78 (TVFRMARTVST) the chain is Cytoplasmic. Residues 79–100 (VCFFHLALADFMLSLSLPIAMY) traverse the membrane as a helical segment. The Extracellular portion of the chain corresponds to 101–116 (YIVSRQWLLGEWACKL). C114 and C191 are joined by a disulfide. A helical transmembrane segment spans residues 117-137 (YITFVFLSYFASNCLLVFISV). Topologically, residues 138–156 (DRCISVLYPVWALNHRTVQ) are cytoplasmic. A helical membrane pass occupies residues 157–178 (RASWLAFGVWLLAAALCSAHLK). Over 179 to 220 (FRTTRKWNGCTHCYLAFNSDNETAQIWIEGVVEGHIIGTIGH) the chain is Extracellular. The N-linked (GlcNAc...) asparagine glycan is linked to N199. A helical transmembrane segment spans residues 221–241 (FLLGFLGPLAIIGTCAHLIRA). The Cytoplasmic segment spans residues 242-257 (KLLREGWVHANRPKRL). A helical membrane pass occupies residues 258 to 280 (LLVLVSAFFIFWSPFNVVLLVHL). The Extracellular portion of the chain corresponds to 281–300 (WRRVMLKEIYHPRMLLILQA). Residues 301 to 320 (SFALGCVNSSLNPFLYVFVG) form a helical membrane-spanning segment. At 321–356 (RDFQEKFFQSLTSALARAFGEEEFLSSCPRGNAPRE) the chain is on the cytoplasmic side.

Belongs to the G-protein coupled receptor 1 family. Expressed in resting primary human macrophages.

It is found in the cell membrane. Functionally, G-protein coupled receptor that binds to several ligands including resolvin D1 (RvD1) with high affinity, leading to rapid and transient activation of numerous intracellular signaling pathways. In macrophages, enhances the RvD1-stimulated phagocytic and clearance functions. Macrophages migrate less toward different chemoattractant stimuli but phagocytose more microbial particles. Prevents the increase in Ca(2+) and activation of ERK1/2 used by histamine and its H1 receptor subtype to induce goblet cell secretion by activating PKC and GRK2 to counter-regulate the histamine receptor. In Homo sapiens (Human), this protein is Probable G-protein coupled receptor 32 (GPR32).